The primary structure comprises 450 residues: MDTIVAVATPPGKGAIAILRLSGPDSWKIVQKHLRTRSKIVPRKAIHGWIHENGEDVDEVVVVFYKSPKSYTGEDMVEVMCHGGPLVVKKLLDLFLKSGARMAEPGEFTKRAFLNGKMDLTSAEAVRDLIEAKSETSLKLSLRNLKGGLRDFVDSLRRELIEVLAEIRVELDYPDEIETNTGEVVTRLERIKEKLTEELKKADAGILLNRGLRMVIVGKPNVGKSTLLNRLLNEDRAIVTDIPGTTRDVISEEIVIRGILFRIVDTAGVRSETNDLVERLGIERTLQEIEKADIVLFVLDASSPLDEEDRKILERIKNKRYLVVINKVDVVEKINEEEIKNKLGTDRHMVKISALKGEGLEKLEESIYRETQEIFERGSDSLITNLRQKQLLENVKGYLEDAIKSLKEGMPVDMASIDLERALNLLDEVTGRSFREDLLDTIFSNFCVGK.

Positions 20, 78, and 117 each coordinate (6S)-5-formyl-5,6,7,8-tetrahydrofolate. The TrmE-type G domain occupies 211–372 (GLRMVIVGKP…LEESIYRETQ (162 aa)). Asn221 provides a ligand contact to K(+). Residues 221-226 (NVGKST), 240-246 (TDIPGTT), and 265-268 (DTAG) contribute to the GTP site. Ser225 is a Mg(2+) binding site. The K(+) site is built by Thr240, Ile242, and Thr245. Thr246 serves as a coordination point for Mg(2+). Lys450 contributes to the (6S)-5-formyl-5,6,7,8-tetrahydrofolate binding site.

The protein belongs to the TRAFAC class TrmE-Era-EngA-EngB-Septin-like GTPase superfamily. TrmE GTPase family. As to quaternary structure, homodimer. Heterotetramer of two MnmE and two MnmG subunits. Requires K(+) as cofactor.

It localises to the cytoplasm. Exhibits a very high intrinsic GTPase hydrolysis rate. Involved in the addition of a carboxymethylaminomethyl (cmnm) group at the wobble position (U34) of certain tRNAs, forming tRNA-cmnm(5)s(2)U34. This chain is tRNA modification GTPase MnmE, found in Thermotoga sp. (strain RQ2).